The chain runs to 397 residues: Protein EMSY-LIKE 3 (397 aa).

The tract at residues methionine 1–serine 40 is disordered. Residues methionine 50–proline 137 form the ENT domain. The stretch at glutamate 81–alanine 107 forms a coiled coil. Disordered regions lie at residues serine 122–proline 221 and aspartate 284–glycine 330. Residues leucine 164–alanine 174 are compositionally biased toward polar residues. The Nuclear localization signal signature appears at leucine 175–proline 182. A coiled-coil region spans residues alanine 363–isoleucine 389. Serine 390 is subject to Phosphoserine.

It is found in the nucleus. Its function is as follows. Probably involved in the regulation of chromatin states. Contributes to basal immunity. This is Protein EMSY-LIKE 3 from Arabidopsis thaliana (Mouse-ear cress).